A 66-amino-acid chain; its full sequence is Large ribosomal subunit protein bL35 (66 aa).

The protein belongs to the bacterial ribosomal protein bL35 family.

The protein is Large ribosomal subunit protein bL35 of Neorickettsia sennetsu (strain ATCC VR-367 / Miyayama) (Ehrlichia sennetsu).